The following is a 230-amino-acid chain: CASP-like protein 2A2 (230 aa).

Residues 1-23 (MEKKDEGNPPMAVMGSRDENEDV) form a disordered region. At 1-29 (MEKKDEGNPPMAVMGSRDENEDVKSTMRT) the chain is on the cytoplasmic side. A helical membrane pass occupies residues 30-50 (AETMLRLVPVALCVSALVVML). The Extracellular segment spans residues 51 to 71 (KNTQTNDYGSLSYSDLGAFRY). The chain crosses the membrane as a helical span at residues 72–92 (LVNANGICAGYSLLSAVIVAM). The Cytoplasmic portion of the chain corresponds to 93–100 (PRAWTMPQ). The helical transmembrane segment at 101-121 (AWTFFLLDQVLTYVILAAGTV) threads the bilayer. At 122–151 (STEVLYLANKGDTSIAWSAACASFGGFCHK) the chain is on the extracellular side. A helical membrane pass occupies residues 152-172 (ALISTVITFVAVIFYAALSLV). Residues 173–230 (SSYKLFSKYDAPVVTQSGEGIKTVTLGSPPPPPPPPPSNLHLHLHAKLACPAHNNSPN) are Cytoplasmic-facing.

The protein belongs to the Casparian strip membrane proteins (CASP) family. In terms of assembly, homodimer and heterodimers.

The protein localises to the cell membrane. The polypeptide is CASP-like protein 2A2 (Populus trichocarpa (Western balsam poplar)).